The sequence spans 198 residues: Patulin synthesis protein F (198 aa).

A signal peptide spans 1–18 (MRLSTVLLGSLLGALTQA). Residues asparagine 128 and asparagine 184 are each glycosylated (N-linked (GlcNAc...) asparagine).

This sequence belongs to the patF family.

The protein resides in the cytoplasm. The protein localises to the cytosol. The catalysed reaction is phyllostine = neopatulin. The protein operates within mycotoxin biosynthesis; patulin biosynthesis. Functionally, part of the gene cluster that mediates the biosynthesis of patulin, an acetate-derived tetraketide mycotoxin produced by several fungal species that shows antimicrobial properties against several bacteria. PatF catalyzes the conversion of phyllostine into neopatulin. The pathway begins with the synthesis of 6-methylsalicylic acid by the polyketide synthase (PKS) patK via condensation of acetate and malonate units. The 6-methylsalicylic acid decarboxylase patG then catalyzes the decarboxylation of 6-methylsalicylic acid to yield m-cresol (also known as 3-methylphenol). These first reactions occur in the cytosol. The intermediate m-cresol is then transported into the endoplasmic reticulum where the cytochrome P450 monooxygenase patH converts it to m-hydroxybenzyl alcohol, which is further converted to gentisyl alcohol by the cytochrome P450 monooxygenase patI. The oxidoreductases patJ and patO further convert gentisyl alcohol to isoepoxydon in the vacuole. PatN catalyzes then the transformation of isoepoxydon into phyllostine. The cluster protein patF is responsible for the conversion from phyllostine to neopatulin whereas the alcohol dehydrogenase patD converts neopatulin to E-ascladiol. The steps between isoepoxydon and E-ascladiol occur in the cytosol, and E-ascladiol is probably secreted to the extracellular space by one of the cluster-specific transporters patC or patM. Finally, the secreted patulin synthase patE catalyzes the conversion of E-ascladiol to patulin. This chain is Patulin synthesis protein F, found in Aspergillus clavatus (strain ATCC 1007 / CBS 513.65 / DSM 816 / NCTC 3887 / NRRL 1 / QM 1276 / 107).